The primary structure comprises 156 residues: Small ribosomal subunit protein uS7 (156 aa).

This sequence belongs to the universal ribosomal protein uS7 family. As to quaternary structure, part of the 30S ribosomal subunit. Contacts proteins S9 and S11.

Functionally, one of the primary rRNA binding proteins, it binds directly to 16S rRNA where it nucleates assembly of the head domain of the 30S subunit. Is located at the subunit interface close to the decoding center, probably blocks exit of the E-site tRNA. The chain is Small ribosomal subunit protein uS7 from Tolumonas auensis (strain DSM 9187 / NBRC 110442 / TA 4).